We begin with the raw amino-acid sequence, 431 residues long: Cyclin-B2-4 (431 aa).

Residues Met1–Thr30 are disordered.

The protein belongs to the cyclin family. Cyclin AB subfamily. As to quaternary structure, interacts with SMR11.

In Arabidopsis thaliana (Mouse-ear cress), this protein is Cyclin-B2-4 (CYCB2-4).